Here is a 192-residue protein sequence, read N- to C-terminus: Fe/S biogenesis protein NfuA (192 aa).

Positions 150 and 153 each coordinate [4Fe-4S] cluster.

This sequence belongs to the NfuA family. In terms of assembly, homodimer. The cofactor is [4Fe-4S] cluster.

Its function is as follows. Involved in iron-sulfur cluster biogenesis. Binds a 4Fe-4S cluster, can transfer this cluster to apoproteins, and thereby intervenes in the maturation of Fe/S proteins. Could also act as a scaffold/chaperone for damaged Fe/S proteins. This is Fe/S biogenesis protein NfuA from Ruthia magnifica subsp. Calyptogena magnifica.